The sequence spans 180 residues: Adenine phosphoribosyltransferase (180 aa).

It belongs to the purine/pyrimidine phosphoribosyltransferase family. As to quaternary structure, homodimer.

It localises to the cytoplasm. It catalyses the reaction AMP + diphosphate = 5-phospho-alpha-D-ribose 1-diphosphate + adenine. Its pathway is purine metabolism; AMP biosynthesis via salvage pathway; AMP from adenine: step 1/1. Catalyzes a salvage reaction resulting in the formation of AMP, that is energically less costly than de novo synthesis. This chain is Adenine phosphoribosyltransferase, found in Mannheimia succiniciproducens (strain KCTC 0769BP / MBEL55E).